A 210-amino-acid polypeptide reads, in one-letter code: Dephospho-CoA kinase (210 aa).

Residues V15–K210 enclose the DPCK domain. G23 to A28 lines the ATP pocket.

It belongs to the CoaE family.

It is found in the cytoplasm. It carries out the reaction 3'-dephospho-CoA + ATP = ADP + CoA + H(+). It functions in the pathway cofactor biosynthesis; coenzyme A biosynthesis; CoA from (R)-pantothenate: step 5/5. Its function is as follows. Catalyzes the phosphorylation of the 3'-hydroxyl group of dephosphocoenzyme A to form coenzyme A. This is Dephospho-CoA kinase from Pseudoalteromonas translucida (strain TAC 125).